Consider the following 570-residue polypeptide: MFS-type transporter pigP (570 aa).

A disordered region spans residues 14–54; the sequence is GMIKKAHPEQTPPDVSHEGDVATEKGDSDGVEQAAPTGPTD. Over residues 28–41 the composition is skewed to basic and acidic residues; sequence VSHEGDVATEKGDS. A run of 7 helical transmembrane segments spans residues 65-85, 99-119, 131-151, 162-182, 192-212, 221-241, and 263-283; these read VMIM…TSII, LPDV…LVPL, WSFV…GVAT, VAGM…AGCV, GLLM…GGAF, CFYI…FVHI, and LVGF…LQYG. Asparagine 290 is a glycosylation site (N-linked (GlcNAc...) asparagine). A run of 7 helical transmembrane segments spans residues 293–313, 336–356, 369–389, 392–412, 425–445, 455–475, and 533–553; these read VVIG…LWEW, VVYG…PIYF, VYIL…GALV, FGYY…GNGL, WIGY…MPII, LIPV…STFL, and VFYL…GMGW.

The protein belongs to the major facilitator superfamily. TCR/Tet family.

The protein resides in the cell membrane. Functionally, MFS-type transporter; part of the gene cluster that mediates the biosynthesis of azaphilone pigments (MonAzPs), very widely used as food colorant. In Monascus ruber (Mold), this protein is MFS-type transporter pigP.